A 113-amino-acid chain; its full sequence is Molt-inhibiting hormone (113 aa).

The signal sequence occupies residues 1–35; the sequence is MMSRTESRYSSQRTWLLSMVVLAALWSISVQRATA. 3 disulfide bridges follow: Cys-42–Cys-79, Cys-59–Cys-75, and Cys-62–Cys-88.

The protein belongs to the arthropod CHH/MIH/GIH/VIH hormone family.

It localises to the secreted. Its function is as follows. Inhibits Y-organs where molting hormone (ecdysteroid) is secreted. A molting cycle is initiated when MIH secretion diminishes or stops. In Metacarcinus magister (Dungeness crab), this protein is Molt-inhibiting hormone.